Reading from the N-terminus, the 367-residue chain is Protein SUPPRESSOR OF FRI 4 (367 aa).

Residues 7 to 66 form a BED-type zinc finger; that stretch reads RATEKVWCYYCDREFDDEKILVQHQKAKHFKCHVCHKKLSTASGMVIHVLQVHKENVTKV. 4 residues coordinate Zn(2+): C38, C41, H54, and H59. Positions 246–309 are disordered; the sequence is PFSAPLPVGG…PPVIANKAPS (64 aa). The segment covering 273 to 295 has biased composition (polar residues); it reads PNNSIPGGTNAHSYASGPNTSGP.

Homodimer. Component of the transcription activator complex FRI-C composed of FRI, FRL1, SUF4, FLX and FES1. Interacts with LD, ASHH2, FRL1, (via C-terminus) with FRI (via C-terminus), and with SWC6, a component of the SWR1 chromatin-remodeling complex. Binds to MED18 to regulate flowering time; recruits MED18 to FLC promoter. In terms of tissue distribution, expressed in root, shoot apex, leaves, stem and flowers. Expressed in expanding leaves, in the vasculature of fully expanded leaves, in the inflorescence, throughout young floral primordia, in the carpels of older flowers and in fertilized ovules.

The protein localises to the nucleus. Functionally, sequence-specific DNA binding factor that recognizes the 5'-CCAAATTTTAAGTTT-3' sequence. Recruits the FRI-C complex to the FLC promoter. Required for FRI-mediated FLC activation, but has no effect on the expression of MAF1, MAF2, MAF3, MAF5, UFC and CO. Dispensable for the reactivation of FLC in early embryogenesis, but required to maintain high levels of FLC expression in later embryonic and vegetative development. The chain is Protein SUPPRESSOR OF FRI 4 from Arabidopsis thaliana (Mouse-ear cress).